The following is a 2798-amino-acid chain: Kinesin-like protein KIN-12F (2798 aa).

The disordered stretch occupies residues 1 to 165 (MVRDLAAVRR…RPPMSSGQRG (165 aa)). Low complexity-rich tracts occupy residues 8 to 22 (VRRT…SSAS) and 31 to 58 (PVDA…QPPQ). Residues 210–547 (NVQVVIRVRP…LKFAQRARLI (338 aa)) form the Kinesin motor domain. Residue 291 to 298 (GQTGSGKT) coordinates ATP. Positions 600–615 (DVDDGTESMNMDEEND) are enriched in acidic residues. Residues 600–621 (DVDDGTESMNMDEENDNDAHDR) are disordered. 5 coiled-coil regions span residues 792-835 (ELKR…HSSN), 890-987 (LAEE…HRRQ), 1014-1108 (LKRM…VMKE), 1281-1322 (QRAM…LKNE), and 2130-2333 (ELVD…VRQQ). The disordered stretch occupies residues 2338 to 2359 (PSSGQATSSLEGGMGDFTDSSR). Coiled coils occupy residues 2361 to 2427 (SREI…VKSD) and 2545 to 2758 (ESKE…LKLK). A disordered region spans residues 2772–2798 (RSESSSLSSGRSRSPSVCRSPSISSFR). The span at 2774–2798 (ESSSLSSGRSRSPSVCRSPSISSFR) shows a compositional bias: low complexity.

It belongs to the TRAFAC class myosin-kinesin ATPase superfamily. Kinesin family. KIN-12 subfamily.

The sequence is that of Kinesin-like protein KIN-12F from Oryza sativa subsp. japonica (Rice).